The chain runs to 133 residues: ATP synthase epsilon chain, chloroplastic (133 aa).

The protein belongs to the ATPase epsilon chain family. As to quaternary structure, F-type ATPases have 2 components, CF(1) - the catalytic core - and CF(0) - the membrane proton channel. CF(1) has five subunits: alpha(3), beta(3), gamma(1), delta(1), epsilon(1). CF(0) has three main subunits: a, b and c.

Its subcellular location is the plastid. It localises to the chloroplast thylakoid membrane. In terms of biological role, produces ATP from ADP in the presence of a proton gradient across the membrane. This Jasminum nudiflorum (Winter jasmine) protein is ATP synthase epsilon chain, chloroplastic.